The following is a 227-amino-acid chain: PKHD-type hydroxylase CC_0027 (227 aa).

The 101-residue stretch at 78–178 folds into the Fe2OG dioxygenase domain; sequence TILSPMFNRY…RTASFFWIQS (101 aa). Fe cation-binding residues include His96, Asp98, and His159. Arg169 contributes to the 2-oxoglutarate binding site.

It depends on Fe(2+) as a cofactor. Requires L-ascorbate as cofactor.

This Caulobacter vibrioides (strain ATCC 19089 / CIP 103742 / CB 15) (Caulobacter crescentus) protein is PKHD-type hydroxylase CC_0027.